The sequence spans 500 residues: L-arabinose isomerase (500 aa).

Residues glutamate 306, glutamate 333, histidine 350, and histidine 450 each coordinate Mn(2+).

Belongs to the arabinose isomerase family. As to quaternary structure, homohexamer. Mn(2+) is required as a cofactor.

It carries out the reaction beta-L-arabinopyranose = L-ribulose. It participates in carbohydrate degradation; L-arabinose degradation via L-ribulose; D-xylulose 5-phosphate from L-arabinose (bacterial route): step 1/3. In terms of biological role, catalyzes the conversion of L-arabinose to L-ribulose. The protein is L-arabinose isomerase of Escherichia fergusonii (strain ATCC 35469 / DSM 13698 / CCUG 18766 / IAM 14443 / JCM 21226 / LMG 7866 / NBRC 102419 / NCTC 12128 / CDC 0568-73).